The chain runs to 1059 residues: Carbamoyl phosphate synthase large chain (1059 aa).

Positions 1–401 (MPKRKDIQKI…SLLKACRSLE (401 aa)) are carboxyphosphate synthetic domain. Positions 129, 169, 175, 176, 208, 210, 215, 241, 242, 243, 284, and 298 each coordinate ATP. The region spanning 133–327 (KQLMEELGQP…IAKLAAKIAV (195 aa)) is the ATP-grasp 1 domain. Mg(2+)-binding residues include Gln-284, Glu-298, and Asn-300. Mn(2+)-binding residues include Gln-284, Glu-298, and Asn-300. Positions 402-546 (VGVDHNELPA…YSTYGFENES (145 aa)) are oligomerization domain. The segment at 547–929 (VKSSKESVLV…ALYKAFEASY (383 aa)) is carbamoyl phosphate synthetic domain. Residues 671–861 (EQALKELDIP…MAQVATRLIL (191 aa)) form the ATP-grasp 2 domain. ATP-binding residues include Arg-707, Ser-746, Ile-748, Glu-752, Gly-777, Val-778, His-779, Ser-780, Gln-820, and Glu-832. Mg(2+) contacts are provided by Gln-820, Glu-832, and Asn-834. Mn(2+)-binding residues include Gln-820, Glu-832, and Asn-834. The 130-residue stretch at 930 to 1059 (LHLPNFGNVV…ESRSFTTEAI (130 aa)) folds into the MGS-like domain. Positions 930–1059 (LHLPNFGNVV…ESRSFTTEAI (130 aa)) are allosteric domain.

Belongs to the CarB family. Composed of two chains; the small (or glutamine) chain promotes the hydrolysis of glutamine to ammonia, which is used by the large (or ammonia) chain to synthesize carbamoyl phosphate. Tetramer of heterodimers (alpha,beta)4. The cofactor is Mg(2+). Mn(2+) is required as a cofactor.

It carries out the reaction hydrogencarbonate + L-glutamine + 2 ATP + H2O = carbamoyl phosphate + L-glutamate + 2 ADP + phosphate + 2 H(+). The catalysed reaction is hydrogencarbonate + NH4(+) + 2 ATP = carbamoyl phosphate + 2 ADP + phosphate + 2 H(+). It functions in the pathway amino-acid biosynthesis; L-arginine biosynthesis; carbamoyl phosphate from bicarbonate: step 1/1. It participates in pyrimidine metabolism; UMP biosynthesis via de novo pathway; (S)-dihydroorotate from bicarbonate: step 1/3. Its function is as follows. Large subunit of the glutamine-dependent carbamoyl phosphate synthetase (CPSase). CPSase catalyzes the formation of carbamoyl phosphate from the ammonia moiety of glutamine, carbonate, and phosphate donated by ATP, constituting the first step of 2 biosynthetic pathways, one leading to arginine and/or urea and the other to pyrimidine nucleotides. The large subunit (synthetase) binds the substrates ammonia (free or transferred from glutamine from the small subunit), hydrogencarbonate and ATP and carries out an ATP-coupled ligase reaction, activating hydrogencarbonate by forming carboxy phosphate which reacts with ammonia to form carbamoyl phosphate. The chain is Carbamoyl phosphate synthase large chain from Streptococcus gordonii (strain Challis / ATCC 35105 / BCRC 15272 / CH1 / DL1 / V288).